The sequence spans 539 residues: Chaperonin GroEL 2 (539 aa).

Residues threonine 29 to proline 32, aspartate 86 to threonine 90, glycine 414, aspartate 479 to leucine 481, and aspartate 495 each bind ATP.

The protein belongs to the chaperonin (HSP60) family. As to quaternary structure, forms a cylinder of 14 subunits composed of two heptameric rings stacked back-to-back. Interacts with the co-chaperonin GroES.

It localises to the cytoplasm. It carries out the reaction ATP + H2O + a folded polypeptide = ADP + phosphate + an unfolded polypeptide.. Together with its co-chaperonin GroES, plays an essential role in assisting protein folding. The GroEL-GroES system forms a nano-cage that allows encapsulation of the non-native substrate proteins and provides a physical environment optimized to promote and accelerate protein folding. The sequence is that of Chaperonin GroEL 2 from Synechococcus sp. (strain JA-2-3B'a(2-13)) (Cyanobacteria bacterium Yellowstone B-Prime).